We begin with the raw amino-acid sequence, 65 residues long: Large ribosomal subunit protein bL35 (65 aa).

The span at methionine 1–serine 15 shows a compositional bias: basic residues. A disordered region spans residues methionine 1–serine 21.

Belongs to the bacterial ribosomal protein bL35 family.

The protein is Large ribosomal subunit protein bL35 of Dechloromonas aromatica (strain RCB).